The sequence spans 125 residues: Ribosome-binding factor A (125 aa).

Belongs to the RbfA family. In terms of assembly, monomer. Binds 30S ribosomal subunits, but not 50S ribosomal subunits or 70S ribosomes.

The protein resides in the cytoplasm. Its function is as follows. One of several proteins that assist in the late maturation steps of the functional core of the 30S ribosomal subunit. Associates with free 30S ribosomal subunits (but not with 30S subunits that are part of 70S ribosomes or polysomes). Required for efficient processing of 16S rRNA. May interact with the 5'-terminal helix region of 16S rRNA. The polypeptide is Ribosome-binding factor A (Wigglesworthia glossinidia brevipalpis).